Here is a 163-residue protein sequence, read N- to C-terminus: Early nodulin-like protein 20 (163 aa).

The first 25 residues, 1–25 (MMGKYLWALVYVTVMILIIVVEVES), serve as a signal peptide directing secretion. The region spanning 26 to 126 (SLHRVGGGRY…GMKLAITVLP (101 aa)) is the Phytocyanin domain. Asn42, Asn63, Asn73, Asn88, and Asn135 each carry an N-linked (GlcNAc...) asparagine glycan. A disulfide bridge links Cys80 with Cys114. Ser138 carries GPI-anchor amidated serine lipidation. A propeptide spans 139-163 (TTTPLIPPNAITAAILIFAFKALLL) (removed in mature form).

The protein belongs to the early nodulin-like (ENODL) family.

The protein resides in the cell membrane. Its function is as follows. May act as a carbohydrate transporter. This chain is Early nodulin-like protein 20, found in Arabidopsis thaliana (Mouse-ear cress).